The sequence spans 114 residues: T cell receptor beta variable 4-1 (114 aa).

The signal sequence occupies residues 1–21; the sequence is MGCRLLCCAVLCLLGAVPIDT. Residues 22 to 114 form the Ig-like domain; it reads EVTQTPKHLV…SALYLCASSQ (93 aa). Cysteine 42 and cysteine 110 are joined by a disulfide. Residues asparagine 76 and asparagine 89 are each glycosylated (N-linked (GlcNAc...) asparagine).

Alpha-beta TR is a heterodimer composed of an alpha and beta chain; disulfide-linked. The alpha-beta TR is associated with the transmembrane signaling CD3 coreceptor proteins to form the TR-CD3 (TcR or TCR). The assembly of alpha-beta TR heterodimers with CD3 occurs in the endoplasmic reticulum where a single alpha-beta TR heterodimer associates with one CD3D-CD3E heterodimer, one CD3G-CD3E heterodimer and one CD247 homodimer forming a stable octameric structure. CD3D-CD3E and CD3G-CD3E heterodimers preferentially associate with TR alpha and TR beta chains, respectively. The association of the CD247 homodimer is the last step of TcR assembly in the endoplasmic reticulum and is required for transport to the cell surface.

Its subcellular location is the cell membrane. Its function is as follows. V region of the variable domain of T cell receptor (TR) beta chain that participates in the antigen recognition. Alpha-beta T cell receptors are antigen specific receptors which are essential to the immune response and are present on the cell surface of T lymphocytes. Recognize peptide-major histocompatibility (MH) (pMH) complexes that are displayed by antigen presenting cells (APC), a prerequisite for efficient T cell adaptive immunity against pathogens. Binding of alpha-beta TR to pMH complex initiates TR-CD3 clustering on the cell surface and intracellular activation of LCK that phosphorylates the ITAM motifs of CD3G, CD3D, CD3E and CD247 enabling the recruitment of ZAP70. In turn ZAP70 phosphorylates LAT, which recruits numerous signaling molecules to form the LAT signalosome. The LAT signalosome propagates signal branching to three major signaling pathways, the calcium, the mitogen-activated protein kinase (MAPK) kinase and the nuclear factor NF-kappa-B (NF-kB) pathways, leading to the mobilization of transcription factors that are critical for gene expression and essential for T cell growth and differentiation. The T cell repertoire is generated in the thymus, by V-(D)-J rearrangement. This repertoire is then shaped by intrathymic selection events to generate a peripheral T cell pool of self-MH restricted, non-autoaggressive T cells. Post-thymic interaction of alpha-beta TR with the pMH complexes shapes TR structural and functional avidity. This Homo sapiens (Human) protein is T cell receptor beta variable 4-1.